The chain runs to 64 residues: Prokaryotic ubiquitin-like protein Pup (64 aa).

The span at 1-11 (MAQEQTKRTGG) shows a compositional bias: basic and acidic residues. The disordered stretch occupies residues 1 to 38 (MAQEQTKRTGGGDEDDTPGGDGAAGQERREKLAEDTDD). The segment at 21-58 (DGAAGQERREKLAEDTDDLLDEIDDVLEENAEDFVRAY) is ARC ATPase binding. A coiled-coil region spans residues 24–52 (AGQERREKLAEDTDDLLDEIDDVLEENAE). At glutamine 64 the chain carries Deamidated glutamine. Glutamine 64 is covalently cross-linked (Isoglutamyl lysine isopeptide (Gln-Lys) (interchain with K-? in acceptor proteins)).

Belongs to the prokaryotic ubiquitin-like protein family. As to quaternary structure, strongly interacts with the proteasome-associated ATPase ARC through a hydrophobic interface; the interacting region of Pup lies in its C-terminal half. There is one Pup binding site per ARC hexamer ring. Is modified by deamidation of its C-terminal glutamine to glutamate by the deamidase Dop, a prerequisite to the subsequent pupylation process.

The protein operates within protein degradation; proteasomal Pup-dependent pathway. In terms of biological role, protein modifier that is covalently attached to lysine residues of substrate proteins, thereby targeting them for proteasomal degradation. The tagging system is termed pupylation. This chain is Prokaryotic ubiquitin-like protein Pup, found in Rhodococcus opacus (strain B4).